We begin with the raw amino-acid sequence, 832 residues long: MMEHDVEDLINQLDISEKAMLLSGTDLWHTAAIPRLNIPSIRLSDGPNGIRGTSFFNSSPSACFPCGTALGATFDKKLLFEVGEYLAEEAKAKGVSVVLGPTVNIHRGPLNGRGFESFSEDSTLSGLAASYVILGLQSKNVQACIKHFVCNDMEDERNSVSIDVSQRALREVYLMPFQLACKYSNFKSLMTSYNKVNGEHVSQSRILLDNILRKEWEWKGTIISDWFGTYSLKKAIDAGLDLEMPGKPRFRNVNTIQHLVGSKELSESILDERAKNVLKLVKHSWQNTEAENHCELNNDSSCLREALKKFASQSIVLLKNKKKLLPLSRKGTFAVIGPNAKVCNYSGGGSANLKPYYTVSMYDGIAAKIDGVPEYALGCHNYLNLPNIANLLVNPRTGKHGYVAKFYLEPATSENRTLIDDYDLEDGVVRFYDYCNDKMKDGYFYIDIEGYLIPDEDAVYEFGISVFGTALLFIDDVLLIDNKTKQTPTNHTFEFGTIEERNSIYLKKGRKYNVRVEYGSAATYTLSTNLSPSTGGRYSIGCVKVIDPETEIDYAVRVAKSVDCVILCVGLTAEWETEGEDRKTMTLPSLSDKLVYSILQSNPNTVVVTQSGTPIEMPWISEAHTLLHIWYNGNELGNALANIIFGEQNPCGKLPITFPKKLKDNPAYLSFRSSRGHCVYGEDVFVGYKYYEAVEREVLFPFGYGLSYTTFELSNLYLKNCGERLRIDLEISNTGPMSGAEIIQVYISQIVRSVNRPVKELKEFSKVVLCPKETKLIRIELDIKYATSFYDELNEKWCSEEGEYNVLVGTSSKDIALTGKFTLPKTIHWTGL.

Asp225 is an active-site residue. Residues 397–556 (TGKHGYVAKF…DPETEIDYAV (160 aa)) form the PA14 domain.

It belongs to the glycosyl hydrolase 3 family.

It localises to the cytoplasm. The enzyme catalyses Hydrolysis of terminal, non-reducing beta-D-glucosyl residues with release of beta-D-glucose.. This chain is Putative beta-glucosidase, found in Schizosaccharomyces pombe (strain 972 / ATCC 24843) (Fission yeast).